The primary structure comprises 488 residues: Intron-encoded DNA endonuclease I-AniI (488 aa).

The tract at residues 1–169 (MRILKSHPLL…DIVEFIWGGL (169 aa)) is cobA exon 1 encoded. Residues 170-488 (YTDEPQCGDV…SEKIKIPSNY (319 aa)) form a cobA intron encoded region.

The protein in the C-terminal section; belongs to the LAGLIDADG endonuclease family. As to quaternary structure, homodimer. It depends on Mg(2+) as a cofactor. The mature protein may arise from proteolytic cleavage of an in-frame translation of cobA exon 1 plus intron, containing the I-AniI open reading frame. Cleavage may take place close to Met-213 resulting in an active endonuclease/maturase of about 30 kDa.

It is found in the mitochondrion. Mitochondrial DNA endonuclease and mRNA maturase involved in intron homing and required for splicing of the cytochrome b (cobA) gene intron, containing its own coding sequence. The protein stimulates the intrinsic ribozyme activity of the intron through binding to and stabilizing specific secondary and tertiary structure elements in the RNA. As an endonuclease it introduces a specific double-strand break at the junction of the two exons the cobA gene and thus mediates the insertion of an intron, containing its own coding sequence (group I intron), into an intronless gene. Recognizes with limited specificity and cleaves the sequence 5'-GAGGAGGTTTCTCTGTA-3'. The proteins RNA and DNA recognition and binding surfaces are independent. This chain is Intron-encoded DNA endonuclease I-AniI (I-AniI), found in Emericella nidulans (Aspergillus nidulans).